The sequence spans 634 residues: Phosphatase and actin regulator 2 (634 aa).

4 disordered regions span residues 1–32 (MDNA…KRKG), 84–344 (LPDQ…PLED), 412–471 (PQLL…ALAS), and 485–508 (NRPS…ERQE). Asp-2 carries the N-myristoyl glycine lipid modification. Residues 13–26 (IANSDGPTAGSQTP) are compositionally biased toward polar residues. Residue Ser-16 is modified to Phosphoserine. Phosphothreonine is present on Thr-25. The stretch at 60 to 85 (AVLERKISTRQSREELIRRGVLKELP) is one RPEL 1 repeat. Composition is skewed to basic and acidic residues over residues 108–120 (ESTR…KSEE) and 137–147 (EDKKENTENHS). The span at 153 to 162 (PALPPSAPPK) shows a compositional bias: pro residues. 2 stretches are compositionally biased toward low complexity: residues 231 to 247 (GSKA…SSRP) and 276 to 290 (TSHL…GTSD). Over residues 291–304 (LKGEPAETRVESFK) the composition is skewed to basic and acidic residues. The span at 324–341 (VPPPPVAPAPSPLAPPLP) shows a compositional bias: pro residues. Ser-423 is modified (phosphoserine). The span at 452 to 464 (TDDEDEDEDEDGS) shows a compositional bias: acidic residues. RPEL repeat units lie at residues 477–502 (DTLA…QRTS), 515–540 (TKLV…KQKN), and 553–578 (RRLS…RFNE). The segment covering 488–508 (SKKELEDKNILQRTSEEERQE) has biased composition (basic and acidic residues). Phosphoserine occurs at positions 522 and 560.

The protein belongs to the phosphatase and actin regulator family. In terms of assembly, binds PPP1CA and actin.

Its subcellular location is the membrane. The sequence is that of Phosphatase and actin regulator 2 (PHACTR2) from Homo sapiens (Human).